Consider the following 157-residue polypeptide: Large ribosomal subunit protein uL22 (157 aa).

It belongs to the universal ribosomal protein uL22 family. As to quaternary structure, part of the 50S ribosomal subunit.

This protein binds specifically to 23S rRNA. It makes multiple contacts with different domains of the 23S rRNA in the assembled 50S subunit and ribosome. In terms of biological role, the globular domain of the protein is located near the polypeptide exit tunnel on the outside of the subunit, while an extended beta-hairpin is found that lines the wall of the exit tunnel in the center of the 70S ribosome. The polypeptide is Large ribosomal subunit protein uL22 (Methanocorpusculum labreanum (strain ATCC 43576 / DSM 4855 / Z)).